We begin with the raw amino-acid sequence, 118 residues long: Large ribosomal subunit protein uL18 (118 aa).

The protein belongs to the universal ribosomal protein uL18 family. In terms of assembly, part of the 50S ribosomal subunit; part of the 5S rRNA/L5/L18/L25 subcomplex. Contacts the 5S and 23S rRNAs.

In terms of biological role, this is one of the proteins that bind and probably mediate the attachment of the 5S RNA into the large ribosomal subunit, where it forms part of the central protuberance. In Levilactobacillus brevis (strain ATCC 367 / BCRC 12310 / CIP 105137 / JCM 1170 / LMG 11437 / NCIMB 947 / NCTC 947) (Lactobacillus brevis), this protein is Large ribosomal subunit protein uL18.